The chain runs to 322 residues: Lipoyl synthase (322 aa).

The segment covering 1-25 has biased composition (basic and acidic residues); sequence MSQRITIDHRSAPALRHPEKAHRPD. Residues 1–29 form a disordered region; that stretch reads MSQRITIDHRSAPALRHPEKAHRPDNPIQ. The [4Fe-4S] cluster site is built by Cys61, Cys66, Cys72, Cys87, Cys91, Cys94, and Ser300. The 217-residue stretch at 73–289 folds into the Radical SAM core domain; the sequence is WSQRHATMMI…AAAARSKGFL (217 aa).

It belongs to the radical SAM superfamily. Lipoyl synthase family. [4Fe-4S] cluster serves as cofactor.

The protein localises to the cytoplasm. It catalyses the reaction [[Fe-S] cluster scaffold protein carrying a second [4Fe-4S](2+) cluster] + N(6)-octanoyl-L-lysyl-[protein] + 2 oxidized [2Fe-2S]-[ferredoxin] + 2 S-adenosyl-L-methionine + 4 H(+) = [[Fe-S] cluster scaffold protein] + N(6)-[(R)-dihydrolipoyl]-L-lysyl-[protein] + 4 Fe(3+) + 2 hydrogen sulfide + 2 5'-deoxyadenosine + 2 L-methionine + 2 reduced [2Fe-2S]-[ferredoxin]. It participates in protein modification; protein lipoylation via endogenous pathway; protein N(6)-(lipoyl)lysine from octanoyl-[acyl-carrier-protein]: step 2/2. Catalyzes the radical-mediated insertion of two sulfur atoms into the C-6 and C-8 positions of the octanoyl moiety bound to the lipoyl domains of lipoate-dependent enzymes, thereby converting the octanoylated domains into lipoylated derivatives. The chain is Lipoyl synthase from Gluconobacter oxydans (strain 621H) (Gluconobacter suboxydans).